The sequence spans 453 residues: tRNA-2-methylthio-N(6)-dimethylallyladenosine synthase (453 aa).

The MTTase N-terminal domain occupies 21–137 (RGVYISTYGC…LPQLVAKSFA (117 aa)). Residues Cys-30, Cys-66, Cys-100, Cys-174, Cys-178, and Cys-181 each coordinate [4Fe-4S] cluster. Residues 160–389 (RNPGVATYVN…FDVHEAMAFE (230 aa)) enclose the Radical SAM core domain. The region spanning 392–453 (KRYEGTTMKV…FPAVFRGEMI (62 aa)) is the TRAM domain.

It belongs to the methylthiotransferase family. MiaB subfamily. In terms of assembly, monomer. It depends on [4Fe-4S] cluster as a cofactor.

The protein resides in the cytoplasm. The catalysed reaction is N(6)-dimethylallyladenosine(37) in tRNA + (sulfur carrier)-SH + AH2 + 2 S-adenosyl-L-methionine = 2-methylsulfanyl-N(6)-dimethylallyladenosine(37) in tRNA + (sulfur carrier)-H + 5'-deoxyadenosine + L-methionine + A + S-adenosyl-L-homocysteine + 2 H(+). Catalyzes the methylthiolation of N6-(dimethylallyl)adenosine (i(6)A), leading to the formation of 2-methylthio-N6-(dimethylallyl)adenosine (ms(2)i(6)A) at position 37 in tRNAs that read codons beginning with uridine. This chain is tRNA-2-methylthio-N(6)-dimethylallyladenosine synthase, found in Bdellovibrio bacteriovorus (strain ATCC 15356 / DSM 50701 / NCIMB 9529 / HD100).